The following is a 226-amino-acid chain: Transmembrane gamma-carboxyglutamic acid protein 4 (226 aa).

The first 17 residues, 1-17, serve as a signal peptide directing secretion; it reads MFTLLVLLSQLPTVTLG. Positions 18-49 are excised as a propeptide; it reads FPHCARGPKASKHAGEEVFTSKEEANFFIHRR. Residues 50–113 are Extracellular-facing; that stretch reads LLYNRFDLEL…KSDGNREKID (64 aa). One can recognise a Gla domain in the interval 52–98; that stretch reads YNRFDLELFTPGNLERECNEELCNYEEAREIFVDEDKTIAFWQEYSA. Cys-69 and Cys-74 form a disulfide bridge. The residue at position 72 (Glu-72) is a 4-carboxyglutamate. A helical transmembrane segment spans residues 114-134; it reads VMGLLTGLIAAGVFLVIFGLL. The Cytoplasmic portion of the chain corresponds to 135-226; it reads GYYLCITKCN…FKKSMSLPSH (92 aa). Ser-163 carries the phosphoserine modification. Positions 186–189 match the LPXY motif; mediates binding to WW domain-containing proteins motif; sequence LPSY. The PPXY motif; mediates binding to WW domain-containing proteins signature appears at 204 to 207; it reads PPPY.

The protein belongs to the commissureless family. Interacts (via cytoplasmic domain) with WW domain-containing proteins MAGI1, MAGI3, NEDD4, NEDD4L, WWTR1/TAZ and YAP1. In terms of processing, gamma-carboxyglutamate residues are formed by vitamin K dependent carboxylation. These residues are essential for the binding of calcium. As to expression, widely expressed with highest levels in kidney.

It localises to the endoplasmic reticulum-Golgi intermediate compartment membrane. It is found in the cell membrane. Its function is as follows. May control axon guidance across the CNS. Prevents the delivery of ROBO1 at the cell surface and down-regulates its expression. The protein is Transmembrane gamma-carboxyglutamic acid protein 4 of Homo sapiens (Human).